Consider the following 90-residue polypeptide: Phosphocarrier protein NPr (90 aa).

Positions 2–90 constitute an HPr domain; that stretch reads TVKQTVEISN…ALFNAGFDED (89 aa). Residue His-16 is the Pros-phosphohistidine intermediate of the active site.

It belongs to the HPr family.

The protein resides in the cytoplasm. Its function is as follows. Component of the phosphoenolpyruvate-dependent nitrogen-metabolic phosphotransferase system (nitrogen-metabolic PTS), that seems to be involved in regulating nitrogen metabolism. The phosphoryl group from phosphoenolpyruvate (PEP) is transferred to the phosphoryl carrier protein NPr by enzyme I-Ntr. Phospho-NPr then transfers it to EIIA-Ntr. Could function in the transcriptional regulation of sigma-54 dependent operons in conjunction with the NPr (PtsO) and EIIA-Ntr (PtsN) proteins. This chain is Phosphocarrier protein NPr (ptsO), found in Klebsiella oxytoca.